Consider the following 268-residue polypeptide: Tryptophan synthase alpha chain (268 aa).

Residues E49 and D60 each act as proton acceptor in the active site.

The protein belongs to the TrpA family. Tetramer of two alpha and two beta chains.

The catalysed reaction is (1S,2R)-1-C-(indol-3-yl)glycerol 3-phosphate + L-serine = D-glyceraldehyde 3-phosphate + L-tryptophan + H2O. Its pathway is amino-acid biosynthesis; L-tryptophan biosynthesis; L-tryptophan from chorismate: step 5/5. In terms of biological role, the alpha subunit is responsible for the aldol cleavage of indoleglycerol phosphate to indole and glyceraldehyde 3-phosphate. This is Tryptophan synthase alpha chain from Shigella flexneri serotype 5b (strain 8401).